Reading from the N-terminus, the 1099-residue chain is Zinc finger protein basonuclin-2 (1099 aa).

The interval 45-66 (EEAEVDVRERETQRDREPKRAR) is disordered. Residues 49-66 (VDVRERETQRDREPKRAR) show a composition bias toward basic and acidic residues. K277 participates in a covalent cross-link: Glycyl lysine isopeptide (Lys-Gly) (interchain with G-Cter in SUMO2). The interval 357–385 (LSTQNEYNESSESEVSPTPYKNDQTPNRN) is disordered. Low complexity predominate over residues 361-372 (NEYNESSESEVS). The segment covering 375-385 (PYKNDQTPNRN) has biased composition (polar residues). Glycyl lysine isopeptide (Lys-Gly) (interchain with G-Cter in SUMO2) cross-links involve residues K396, K416, and K421. The tract at residues 397–423 (TEPACVSPIQNSAPVSDLTKTEHPKSS) is disordered. A C2H2-type 1 zinc finger spans residues 441 to 464 (VFCNACGKTFYDKGTLKIHYNAVH). S561 is modified (phosphoserine). Disordered regions lie at residues 622 to 641 (EPSA…MPVK) and 648 to 742 (DTAD…EGDE). K641 participates in a covalent cross-link: Glycyl lysine isopeptide (Lys-Gly) (interchain with G-Cter in SUMO2). The segment covering 648 to 661 (DTADEFDDEDDDPN) has biased composition (acidic residues). 2 stretches are compositionally biased toward basic and acidic residues: residues 670–680 (MSHDNHCHSQE) and 719–742 (ERDY…EGDE). Residues 833 to 856 (KICYVCKKSFKSSYSVKLHYRNVH) form a C2H2-type 2 zinc finger. Residues K894 and K919 each participate in a glycyl lysine isopeptide (Lys-Gly) (interchain with G-Cter in SUMO2) cross-link. 2 disordered regions span residues 929 to 948 (LDVR…HLNG) and 968 to 1008 (LQSS…KAEA). Over residues 982 to 995 (AGSDEGILLDDIDG) the composition is skewed to acidic residues. 2 consecutive C2H2-type zinc fingers follow at residues 1035-1058 (IMCN…KTVH) and 1063-1090 (HKCK…PNLH). Residues 1079–1099 (SRNRHSQNPNLHKNIPFTSVD) are disordered.

Highly expressed in testis, uterus and small intestine, and weakly expressed in colon and prostate. Also expressed in skin, primary keratinocytes, immortalized keratinocytes, and HeLa and HEK293 cells. Not detected in blood, thymus, spleen or Hep-G2 cells.

Its subcellular location is the nucleus. Its function is as follows. Probable transcription factor specific for skin keratinocytes. May play a role in the differentiation of spermatozoa and oocytes. May also play an important role in early urinary-tract development. The protein is Zinc finger protein basonuclin-2 of Homo sapiens (Human).